We begin with the raw amino-acid sequence, 673 residues long: DNA ligase (673 aa).

Residues 34–38, 83–84, and E116 each bind NAD(+); these read DAEYD and SL. Catalysis depends on K118, which acts as the N6-AMP-lysine intermediate. NAD(+) is bound by residues R139, E176, K293, and K317. Residues C411, C414, C429, and C435 each coordinate Zn(2+). Residues 595-673 form the BRCT domain; sequence NQQNPFFGKT…EDEFLKWVNS (79 aa).

This sequence belongs to the NAD-dependent DNA ligase family. LigA subfamily. Requires Mg(2+) as cofactor. Mn(2+) serves as cofactor.

It carries out the reaction NAD(+) + (deoxyribonucleotide)n-3'-hydroxyl + 5'-phospho-(deoxyribonucleotide)m = (deoxyribonucleotide)n+m + AMP + beta-nicotinamide D-nucleotide.. Its function is as follows. DNA ligase that catalyzes the formation of phosphodiester linkages between 5'-phosphoryl and 3'-hydroxyl groups in double-stranded DNA using NAD as a coenzyme and as the energy source for the reaction. It is essential for DNA replication and repair of damaged DNA. This Legionella pneumophila subsp. pneumophila (strain Philadelphia 1 / ATCC 33152 / DSM 7513) protein is DNA ligase.